Reading from the N-terminus, the 283-residue chain is tRNA pseudouridine synthase A (283 aa).

Catalysis depends on Asp-73, which acts as the Nucleophile. The RNA binding stretch occupies residues 120–124; sequence FHARF. Residue Tyr-131 coordinates substrate. Residues 181–185 form an interaction with tRNA region; it reads QCQSR.

Belongs to the tRNA pseudouridine synthase TruA family. As to quaternary structure, homodimer.

The catalysed reaction is uridine(38/39/40) in tRNA = pseudouridine(38/39/40) in tRNA. Formation of pseudouridine at positions 38, 39 and 40 in the anticodon stem and loop of transfer RNAs. The sequence is that of tRNA pseudouridine synthase A from Pectobacterium atrosepticum (strain SCRI 1043 / ATCC BAA-672) (Erwinia carotovora subsp. atroseptica).